Consider the following 433-residue polypeptide: Zuotin (433 aa).

Ser50 carries the post-translational modification Phosphoserine. The J domain occupies 98 to 170; sequence LYAAMGLSKL…RAQYDSCDFV (73 aa). Residues 292–330 show a composition bias toward basic and acidic residues; it reads EEKKEKERRKWEREAGARAEAEAKAKAEAEAKAKAESEA. Residues 292 to 357 are disordered; that stretch reads EEKKEKERRK…KAAKKKNKRA (66 aa).

As to quaternary structure, RAC is a heterodimer of the Hsp70/DnaK-type chaperone SSZ1 and the Hsp40/DnaJ-type chaperone ZUO1. RAC associates with ribosomes via ZUO1.

It is found in the cytoplasm. Functionally, component of the ribosome-associated complex (RAC), a heterodimeric chaperone complex involved in regulation of accurate translation termination and in folding or maintaining nascent polypeptides in a folding-competent state. RAC stimulates the ATPase activity of the ribosome-associated pool of Hsp70-type chaperones SSB1/SSB2 that bind to the nascent polypeptide chain. ZUO1 can act as a J-protein for SSB1/SSB2 only when associated with SSZ1. The polypeptide is Zuotin (ZUO1) (Saccharomyces cerevisiae (strain ATCC 204508 / S288c) (Baker's yeast)).